Here is a 369-residue protein sequence, read N- to C-terminus: Proton-coupled zinc antiporter SLC30A8 (369 aa).

Residues 1-79 (MEFLERTYLV…AKWKLCSASA (79 aa)) lie on the Cytoplasmic side of the membrane. The disordered stretch occupies residues 31–52 (PVNKDQCPRERPEELESGGMYH). Basic and acidic residues predominate over residues 32–44 (VNKDQCPRERPEE). Zn(2+)-binding residues include histidine 52, cysteine 53, and histidine 54. Positions 52–54 (HCH) match the HCH Motif; seals regulatory zinc-binding pocket motif. A helical membrane pass occupies residues 80–100 (ICFIFMIAEVVGGHIAGSLAV). The Lumenal, vesicle segment spans residues 101 to 103 (VTD). A helical transmembrane segment spans residues 104–124 (AAHLLIDLTSFLLSLFSLWLS). Positions 106, 110, and 137 each coordinate Zn(2+). At 125–140 (SKPPSKRLTFGWHRAE) the chain is on the cytoplasmic side. A helical membrane pass occupies residues 141 to 161 (ILGALLSILCIWVVTGVLVYL). Over 162–175 (ACERLLYPDYQIQA) the chain is Lumenal, vesicle. Residues 176–196 (TVMIIVSSCAVAANIVLTVVL) form a helical membrane-spanning segment. Topologically, residues 197–217 (HQRCLGHNHKEVQANASVRAA) are cytoplasmic. A helical membrane pass occupies residues 218–238 (FVHALGDLFQSISVLISALII). Residues histidine 220 and aspartate 224 each coordinate Zn(2+). The Lumenal, vesicle segment spans residues 239–245 (YFKPEYK). A helical membrane pass occupies residues 246-266 (IADPICTFIFSILVLASTITI). Over 267 to 369 (LKDFSILLME…DCLFCEDPCD (103 aa)) the chain is Cytoplasmic. Zn(2+)-binding residues include histidine 301, histidine 318, histidine 345, glutamate 352, cysteine 361, and cysteine 364.

The protein belongs to the cation diffusion facilitator (CDF) transporter (TC 2.A.4) family. SLC30A subfamily. As to quaternary structure, homodimer. As to expression, in the endocrine pancreas, expressed in insulin-producing beta cells. Expressed at relatively high levels in subcutaneous fat tissue from lean persons; much lower levels in visceral fat, whether from lean or obese individuals, and in subcutaneous fat tissue from obese individuals. Expressed in peripheral blood mononuclear cells, including T-cells and B-cells, with great variation among individuals ranging from negative to strongly positive.

It is found in the cytoplasmic vesicle. Its subcellular location is the secretory vesicle membrane. The protein resides in the cell membrane. The enzyme catalyses Zn(2+)(in) + 2 H(+)(out) = Zn(2+)(out) + 2 H(+)(in). Its function is as follows. Proton-coupled zinc ion antiporter mediating the entry of zinc into the lumen of pancreatic beta cell secretory granules, thereby regulating insulin secretion. In Homo sapiens (Human), this protein is Proton-coupled zinc antiporter SLC30A8.